Reading from the N-terminus, the 431-residue chain is MAQFYSAKRRVTTRQIITVKVNDLDSFGQGVARHNGKALFIPGLLPEESAEVIITEDKKQFARARVSRRLNDSPERETPRCPHFGVCGGCQQQHVSIALQQRSKSAALARLMKHEVKDIIAGAPWGYRRRARLSLNCPPDKPLQMGFRKAGSSDIVNVEQCPVLAPQLAALLPRIRACLASLHGTRHLGHVELVQAGSGTLMILRHTAPLSAADKEKLERFSHSEGLSLFLAPFSEILETVSGEAPWYDSHGLRLAFSPRDFIQVNEAVNQQMVARALEWLDVRAEDRVLDLFCGMGNFTLPLATRAASVVGVEGVPALVEKGRENAIRNGLHNVTFFHENLEEDVTKQPWAKNGFDKVLLDPARAGATGVMRHIIKLKPIRIVYVSCNPATLARDSEALVNAGYEVTRLAMLDMFPHTGHLESMVLFERM.

Positions 10 to 68 (RVTTRQIITVKVNDLDSFGQGVARHNGKALFIPGLLPEESAEVIITEDKKQFARARVSR) constitute a TRAM domain. The [4Fe-4S] cluster site is built by C81, C87, C90, and C161. Q264, F293, N298, E314, N341, and D362 together coordinate S-adenosyl-L-methionine. Catalysis depends on C388, which acts as the Nucleophile.

The protein belongs to the class I-like SAM-binding methyltransferase superfamily. RNA M5U methyltransferase family. RlmD subfamily.

The catalysed reaction is uridine(1939) in 23S rRNA + S-adenosyl-L-methionine = 5-methyluridine(1939) in 23S rRNA + S-adenosyl-L-homocysteine + H(+). Its function is as follows. Catalyzes the formation of 5-methyl-uridine at position 1939 (m5U1939) in 23S rRNA. The chain is 23S rRNA (uracil(1939)-C(5))-methyltransferase RlmD from Salmonella choleraesuis (strain SC-B67).